The chain runs to 418 residues: D-inositol 3-phosphate glycosyltransferase 1 (418 aa).

UDP-N-acetyl-alpha-D-glucosamine-binding positions include 24-25 (QP) and Gly-32. Residues 29–34 (DAGGLN), Lys-87, His-115, Ser-139, and Gln-159 contribute to the 1D-myo-inositol 3-phosphate site. The UDP-N-acetyl-alpha-D-glucosamine site is built by Arg-233 and Lys-238. The Mg(2+) site is built by Tyr-308, Arg-309, and Ala-311. UDP-N-acetyl-alpha-D-glucosamine is bound by residues Glu-321 and Glu-329. Mg(2+) is bound at residue Thr-335.

It belongs to the glycosyltransferase group 1 family. MshA subfamily. Homodimer.

It catalyses the reaction 1D-myo-inositol 3-phosphate + UDP-N-acetyl-alpha-D-glucosamine = 1D-myo-inositol 2-acetamido-2-deoxy-alpha-D-glucopyranoside 3-phosphate + UDP + H(+). In terms of biological role, catalyzes the transfer of a N-acetyl-glucosamine moiety to 1D-myo-inositol 3-phosphate to produce 1D-myo-inositol 2-acetamido-2-deoxy-glucopyranoside 3-phosphate in the mycothiol biosynthesis pathway. This chain is D-inositol 3-phosphate glycosyltransferase 1, found in Catenulispora acidiphila (strain DSM 44928 / JCM 14897 / NBRC 102108 / NRRL B-24433 / ID139908).